We begin with the raw amino-acid sequence, 353 residues long: Farnesyl pyrophosphate synthase (353 aa).

Isopentenyl diphosphate contacts are provided by Lys-57, Arg-60, and Gln-96. N6-(2-hydroxyisobutyryl)lysine; alternate is present on Lys-57. Lys-57 is subject to N6-acetyllysine; alternate. Asp-103 and Asp-107 together coordinate Mg(2+). Position 112 (Arg-112) interacts with dimethylallyl diphosphate. Isopentenyl diphosphate is bound at residue Arg-113. Residues Lys-200, Thr-201, Gln-240, Lys-257, and Lys-266 each coordinate dimethylallyl diphosphate.

It belongs to the FPP/GGPP synthase family. As to quaternary structure, homodimer. Interacts with RSAD2. Interacts with bovine leukemia virus (BLV) protein G4. Requires Mg(2+) as cofactor.

The protein localises to the cytoplasm. The enzyme catalyses isopentenyl diphosphate + dimethylallyl diphosphate = (2E)-geranyl diphosphate + diphosphate. It carries out the reaction isopentenyl diphosphate + (2E)-geranyl diphosphate = (2E,6E)-farnesyl diphosphate + diphosphate. The protein operates within isoprenoid biosynthesis; farnesyl diphosphate biosynthesis; farnesyl diphosphate from geranyl diphosphate and isopentenyl diphosphate: step 1/1. Its pathway is isoprenoid biosynthesis; geranyl diphosphate biosynthesis; geranyl diphosphate from dimethylallyl diphosphate and isopentenyl diphosphate: step 1/1. Its activity is regulated as follows. Inactivated by interferon-induced RSAD2. This inactivation may result of disruption of lipid rafts at the plasma membrane, and thus have an antiviral effect since many enveloped viruses need lipid rafts to bud efficiently out of the cell. Key enzyme in isoprenoid biosynthesis which catalyzes the formation of farnesyl diphosphate (FPP), a precursor for several classes of essential metabolites including sterols, dolichols, carotenoids, and ubiquinones. FPP also serves as substrate for protein farnesylation and geranylgeranylation. Catalyzes the sequential condensation of isopentenyl pyrophosphate with the allylic pyrophosphates, dimethylallyl pyrophosphate, and then with the resultant geranylpyrophosphate to the ultimate product farnesyl pyrophosphate. The sequence is that of Farnesyl pyrophosphate synthase (FDPS) from Bos taurus (Bovine).